Reading from the N-terminus, the 188-residue chain is Protein SSX1 (188 aa).

Disordered regions lie at residues 1–22 (MNGD…EKRS) and 111–188 (IMPK…EDDE). Residues 20–83 (KRSKAFDDIA…KQATDFQGND (64 aa)) enclose the KRAB-related domain. The span at 115–125 (KPAEDENDSKG) shows a compositional bias: basic and acidic residues. Serine 123 bears the Phosphoserine mark. The span at 153 to 170 (KRSGPKRGKHAWTHRLRE) shows a compositional bias: basic residues. The span at 179 to 188 (EISDPEEDDE) shows a compositional bias: acidic residues.

The protein belongs to the SSX family. As to expression, expressed at high level in the testis. Expressed at low level in thyroid. Not detected in tonsil, colon, lung, spleen, prostate, kidney, striated and smooth muscles. Detected in rhabdomyosarcoma and fibrosarcoma cell lines. Not detected in mesenchymal and epithelial cell lines. Expressed in testis.

Its subcellular location is the cytoplasm. It is found in the cytoskeleton. The protein resides in the flagellum axoneme. Functionally, could act as a modulator of transcription. Plays a role in spermatogenesis. This is Protein SSX1 (SSX1) from Homo sapiens (Human).